A 56-amino-acid polypeptide reads, in one-letter code: MAVQKNRKTRSKRGMRRSHDALGTATMSVDSTSGETHVRHHVTADGYYKGKKVLSL.

Over residues 1–16 the composition is skewed to basic residues; sequence MAVQKNRKTRSKRGMR. Residues 1–37 form a disordered region; it reads MAVQKNRKTRSKRGMRRSHDALGTATMSVDSTSGETH. A compositionally biased stretch (polar residues) spans 25–35; it reads ATMSVDSTSGE.

The protein belongs to the bacterial ribosomal protein bL32 family.

In Pseudoalteromonas atlantica (strain T6c / ATCC BAA-1087), this protein is Large ribosomal subunit protein bL32.